Here is a 154-residue protein sequence, read N- to C-terminus: Ribonuclease H (154 aa).

One can recognise an RNase H type-1 domain in the interval 5-146; it reads EQNIVYLYCD…ADELANRGID (142 aa). Aspartate 14, glutamate 52, aspartate 74, and aspartate 138 together coordinate Mg(2+).

Belongs to the RNase H family. As to quaternary structure, monomer. It depends on Mg(2+) as a cofactor.

The protein resides in the cytoplasm. The enzyme catalyses Endonucleolytic cleavage to 5'-phosphomonoester.. Functionally, endonuclease that specifically degrades the RNA of RNA-DNA hybrids. This is Ribonuclease H from Coxiella burnetii (strain CbuK_Q154) (Coxiella burnetii (strain Q154)).